The sequence spans 321 residues: D-alanine--D-alanine ligase (321 aa).

The region spanning 121–315 (RSCFLKNNIN…FTNLIEEIIK (195 aa)) is the ATP-grasp domain. 148–199 (MKRPYVIKPLKQGSSIGVEVIFEEDDFHFIDYDFPYGEDIIIEQYIQGQELQ) serves as a coordination point for ATP. Positions 268, 282, and 284 each coordinate Mg(2+).

This sequence belongs to the D-alanine--D-alanine ligase family. It depends on Mg(2+) as a cofactor. Mn(2+) is required as a cofactor.

It localises to the cytoplasm. The enzyme catalyses 2 D-alanine + ATP = D-alanyl-D-alanine + ADP + phosphate + H(+). It participates in cell wall biogenesis; peptidoglycan biosynthesis. Cell wall formation. The polypeptide is D-alanine--D-alanine ligase (Rickettsia typhi (strain ATCC VR-144 / Wilmington)).